We begin with the raw amino-acid sequence, 963 residues long: Isoleucine--tRNA ligase (963 aa).

Positions 66–76 (PYANGDIHIGH) match the 'HIGH' region motif. L-isoleucyl-5'-AMP is bound at residue Glu596. Positions 637-641 (KMSKS) match the 'KMSKS' region motif. Lys640 is a binding site for ATP. The Zn(2+) site is built by Cys926, Cys929, Cys946, and Cys949.

The protein belongs to the class-I aminoacyl-tRNA synthetase family. IleS type 1 subfamily. As to quaternary structure, monomer. Requires Zn(2+) as cofactor.

It localises to the cytoplasm. It carries out the reaction tRNA(Ile) + L-isoleucine + ATP = L-isoleucyl-tRNA(Ile) + AMP + diphosphate. Its function is as follows. Catalyzes the attachment of isoleucine to tRNA(Ile). As IleRS can inadvertently accommodate and process structurally similar amino acids such as valine, to avoid such errors it has two additional distinct tRNA(Ile)-dependent editing activities. One activity is designated as 'pretransfer' editing and involves the hydrolysis of activated Val-AMP. The other activity is designated 'posttransfer' editing and involves deacylation of mischarged Val-tRNA(Ile). This Cupriavidus pinatubonensis (strain JMP 134 / LMG 1197) (Cupriavidus necator (strain JMP 134)) protein is Isoleucine--tRNA ligase.